Reading from the N-terminus, the 100-residue chain is NADH-quinone oxidoreductase subunit K (100 aa).

A run of 3 helical transmembrane segments spans residues Leu-4–Ile-24, Leu-28–Val-48, and Ile-60–Leu-80.

The protein belongs to the complex I subunit 4L family. In terms of assembly, NDH-1 is composed of 13 different subunits. Subunits NuoA, H, J, K, L, M, N constitute the membrane sector of the complex.

The protein resides in the cell inner membrane. The enzyme catalyses a quinone + NADH + 5 H(+)(in) = a quinol + NAD(+) + 4 H(+)(out). Functionally, NDH-1 shuttles electrons from NADH, via FMN and iron-sulfur (Fe-S) centers, to quinones in the respiratory chain. The immediate electron acceptor for the enzyme in this species is believed to be ubiquinone. Couples the redox reaction to proton translocation (for every two electrons transferred, four hydrogen ions are translocated across the cytoplasmic membrane), and thus conserves the redox energy in a proton gradient. The chain is NADH-quinone oxidoreductase subunit K from Klebsiella pneumoniae (strain 342).